The chain runs to 189 residues: Probable transcriptional regulator Rv1176c (189 aa).

It belongs to the PadR family. As to quaternary structure, homodimer.

The protein resides in the cytoplasm. Its function is as follows. Probable transcriptional regulator that may help mitigate the effect of oxidative stress and help mycobacteria survive inside macrophages. Binds to its own promoter region. The protein is Probable transcriptional regulator Rv1176c of Mycobacterium tuberculosis (strain ATCC 25618 / H37Rv).